A 230-amino-acid polypeptide reads, in one-letter code: MKKKKALPSFLYLVFIVLLPWGVSFSFNKCLELWIKNWWNTRQSQTLLTAIQEKRVLERFMELEDLFILDEMIKEKPNTHVQNPPIGIRKEIIQLAKIDNEGHLHIILHFSTNIICLAILSGSFFLGKEELVILNSWVQEFFYNLNDSVKAFFILLVTDFFVGFHSTRGWELLIRWVYNDLGWVPNELIFTIFVCSFPVILDTCLKFWVFFCLNRLSPSLVVIYHSISEA.

4 helical membrane passes run 7-27 (LPSFLYLVFIVLLPWGVSFSF), 106-126 (IILHFSTNIICLAILSGSFFL), 145-165 (LNDSVKAFFILLVTDFFVGFH), and 181-201 (LGWVPNELIFTIFVCSFPVIL).

The protein belongs to the CemA family.

It is found in the plastid. The protein localises to the chloroplast inner membrane. The catalysed reaction is K(+)(in) + H(+)(out) = K(+)(out) + H(+)(in). In terms of biological role, contributes to K(+)/H(+) antiport activity by supporting proton efflux to control proton extrusion and homeostasis in chloroplasts in a light-dependent manner to modulate photosynthesis. Prevents excessive induction of non-photochemical quenching (NPQ) under continuous-light conditions. Indirectly promotes efficient inorganic carbon uptake into chloroplasts. This Oryza nivara (Indian wild rice) protein is Potassium/proton antiporter CemA.